The following is a 334-amino-acid chain: Methylthioribose-1-phosphate isomerase (334 aa).

Substrate contacts are provided by residues 44-46, R87, and Q192; that span reads RGA. D233 functions as the Proton donor in the catalytic mechanism. Residue 243 to 244 participates in substrate binding; that stretch reads NK.

This sequence belongs to the eIF-2B alpha/beta/delta subunits family. MtnA subfamily.

It catalyses the reaction 5-(methylsulfanyl)-alpha-D-ribose 1-phosphate = 5-(methylsulfanyl)-D-ribulose 1-phosphate. Its pathway is amino-acid biosynthesis; L-methionine biosynthesis via salvage pathway; L-methionine from S-methyl-5-thio-alpha-D-ribose 1-phosphate: step 1/6. Its function is as follows. Catalyzes the interconversion of methylthioribose-1-phosphate (MTR-1-P) into methylthioribulose-1-phosphate (MTRu-1-P). This is Methylthioribose-1-phosphate isomerase from Dehalococcoides mccartyi (strain ATCC BAA-2266 / KCTC 15142 / 195) (Dehalococcoides ethenogenes (strain 195)).